Consider the following 210-residue polypeptide: Cytochrome c biogenesis ATP-binding export protein CcmA (210 aa).

The region spanning Leu-3 to Leu-205 is the ABC transporter domain. ATP is bound at residue Gly-37 to Thr-44.

The protein belongs to the ABC transporter superfamily. CcmA exporter (TC 3.A.1.107) family. The complex is composed of two ATP-binding proteins (CcmA) and two transmembrane proteins (CcmB).

It localises to the cell inner membrane. The enzyme catalyses heme b(in) + ATP + H2O = heme b(out) + ADP + phosphate + H(+). Its function is as follows. Part of the ABC transporter complex CcmAB involved in the biogenesis of c-type cytochromes; once thought to export heme, this seems not to be the case, but its exact role is uncertain. Responsible for energy coupling to the transport system. The polypeptide is Cytochrome c biogenesis ATP-binding export protein CcmA (Pseudomonas putida (strain ATCC 47054 / DSM 6125 / CFBP 8728 / NCIMB 11950 / KT2440)).